The chain runs to 777 residues: Santalene and bergamotene synthase, chloroplastic (777 aa).

The transit peptide at 1 to 36 (MIVGYRSTIITLSHPKLGNGKTISSNAIFQRSCRVR) directs the protein to the chloroplast. Mg(2+) is bound by residues Asp530 and Asp534. Positions 530–534 (DDQFD) match the DDXXD motif motif.

Belongs to the terpene synthase family. Tpse subfamily. It depends on Mg(2+) as a cofactor. Requires Mn(2+) as cofactor.

Its subcellular location is the plastid. It localises to the chloroplast. It catalyses the reaction (2Z,6Z)-farnesyl diphosphate = (+)-alpha-santalene + diphosphate. It carries out the reaction (2Z,6Z)-farnesyl diphosphate = (+)-endo-beta-bergamotene + diphosphate. The enzyme catalyses (2Z,6Z)-farnesyl diphosphate = (1S,5S,6S)-alpha-bergamotene + diphosphate. (2Z,6Z)-farnesyl diphosphate cyclizing enzyme. Produces (+)-alpha-santalene, (+)-endo-beta-bergamotene, (-)-endo-alpha-bergamotene, and at lower amounts, (-)exo-alpha-bergamotene and (+)-epi-beta-santalene. Not able to use geranyl diphosphate, E,E-farnesyl diphosphate or E,E,E-geranylgeranyl diphosphate as substrates, but able to use Neryl diphosphate to make the monoterpene terpineol. In Solanum habrochaites (Wild tomato), this protein is Santalene and bergamotene synthase, chloroplastic (SBS).